Reading from the N-terminus, the 319-residue chain is Acetyl esterase (319 aa).

Positions 91 to 93 match the Involved in the stabilization of the negatively charged intermediate by the formation of the oxyanion hole motif; the sequence is HGG. Catalysis depends on residues serine 165, aspartate 262, and histidine 292.

Belongs to the 'GDXG' lipolytic enzyme family. Homodimer. Interacts with MalT and MelA.

Its subcellular location is the cytoplasm. In terms of biological role, displays esterase activity towards short chain fatty esters (acyl chain length of up to 8 carbons). Able to hydrolyze triacetylglycerol (triacetin) and tributyrylglycerol (tributyrin), but not trioleylglycerol (triolein) or cholesterol oleate. Negatively regulates MalT activity by antagonizing maltotriose binding. Inhibits MelA galactosidase activity. The chain is Acetyl esterase from Shigella boydii serotype 4 (strain Sb227).